Consider the following 122-residue polypeptide: Large ribosomal subunit protein uL14 (122 aa).

This sequence belongs to the universal ribosomal protein uL14 family. Part of the 50S ribosomal subunit. Forms a cluster with proteins L3 and L19. In the 70S ribosome, L14 and L19 interact and together make contacts with the 16S rRNA in bridges B5 and B8.

Its function is as follows. Binds to 23S rRNA. Forms part of two intersubunit bridges in the 70S ribosome. This chain is Large ribosomal subunit protein uL14, found in Herminiimonas arsenicoxydans.